A 113-amino-acid chain; its full sequence is Large ribosomal subunit protein uL22 (113 aa).

This sequence belongs to the universal ribosomal protein uL22 family. Part of the 50S ribosomal subunit.

In terms of biological role, this protein binds specifically to 23S rRNA; its binding is stimulated by other ribosomal proteins, e.g. L4, L17, and L20. It is important during the early stages of 50S assembly. It makes multiple contacts with different domains of the 23S rRNA in the assembled 50S subunit and ribosome. Its function is as follows. The globular domain of the protein is located near the polypeptide exit tunnel on the outside of the subunit, while an extended beta-hairpin is found that lines the wall of the exit tunnel in the center of the 70S ribosome. The chain is Large ribosomal subunit protein uL22 from Herpetosiphon aurantiacus (strain ATCC 23779 / DSM 785 / 114-95).